We begin with the raw amino-acid sequence, 215 residues long: N-(5'-phosphoribosyl)anthranilate isomerase (215 aa).

The protein belongs to the TrpF family.

It carries out the reaction N-(5-phospho-beta-D-ribosyl)anthranilate = 1-(2-carboxyphenylamino)-1-deoxy-D-ribulose 5-phosphate. It participates in amino-acid biosynthesis; L-tryptophan biosynthesis; L-tryptophan from chorismate: step 3/5. The chain is N-(5'-phosphoribosyl)anthranilate isomerase from Paracoccus denitrificans (strain Pd 1222).